Consider the following 153-residue polypeptide: Transcription antitermination protein NusB (153 aa).

The protein belongs to the NusB family.

Its function is as follows. Involved in transcription antitermination. Required for transcription of ribosomal RNA (rRNA) genes. Binds specifically to the boxA antiterminator sequence of the ribosomal RNA (rrn) operons. This chain is Transcription antitermination protein NusB, found in Symbiobacterium thermophilum (strain DSM 24528 / JCM 14929 / IAM 14863 / T).